We begin with the raw amino-acid sequence, 239 residues long: Endonuclease V (239 aa).

Mg(2+)-binding residues include aspartate 48 and aspartate 116.

The protein belongs to the endonuclease V family. The cofactor is Mg(2+).

It is found in the cytoplasm. It catalyses the reaction Endonucleolytic cleavage at apurinic or apyrimidinic sites to products with a 5'-phosphate.. Functionally, DNA repair enzyme involved in the repair of deaminated bases. Selectively cleaves double-stranded DNA at the second phosphodiester bond 3' to a deoxyinosine leaving behind the intact lesion on the nicked DNA. The polypeptide is Endonuclease V (Xanthomonas oryzae pv. oryzae (strain MAFF 311018)).